The primary structure comprises 418 residues: Glutamyl-tRNA reductase (418 aa).

Substrate-binding positions include threonine 49 to arginine 52, serine 108, glutamate 113 to glutamine 115, and glutamine 119. Catalysis depends on cysteine 50, which acts as the Nucleophile. Glycine 188 to isoleucine 193 is a binding site for NADP(+).

This sequence belongs to the glutamyl-tRNA reductase family. In terms of assembly, homodimer.

The catalysed reaction is (S)-4-amino-5-oxopentanoate + tRNA(Glu) + NADP(+) = L-glutamyl-tRNA(Glu) + NADPH + H(+). The protein operates within porphyrin-containing compound metabolism; protoporphyrin-IX biosynthesis; 5-aminolevulinate from L-glutamyl-tRNA(Glu): step 1/2. Catalyzes the NADPH-dependent reduction of glutamyl-tRNA(Glu) to glutamate 1-semialdehyde (GSA). This Aliivibrio fischeri (strain MJ11) (Vibrio fischeri) protein is Glutamyl-tRNA reductase.